Consider the following 131-residue polypeptide: Phosphoribosyl-AMP cyclohydrolase (131 aa).

Position 78 (aspartate 78) interacts with Mg(2+). A Zn(2+)-binding site is contributed by cysteine 79. Residues aspartate 80 and aspartate 82 each coordinate Mg(2+). The Zn(2+) site is built by cysteine 96 and cysteine 103.

The protein belongs to the PRA-CH family. As to quaternary structure, homodimer. Requires Mg(2+) as cofactor. It depends on Zn(2+) as a cofactor.

The protein localises to the cytoplasm. The enzyme catalyses 1-(5-phospho-beta-D-ribosyl)-5'-AMP + H2O = 1-(5-phospho-beta-D-ribosyl)-5-[(5-phospho-beta-D-ribosylamino)methylideneamino]imidazole-4-carboxamide. It participates in amino-acid biosynthesis; L-histidine biosynthesis; L-histidine from 5-phospho-alpha-D-ribose 1-diphosphate: step 3/9. Functionally, catalyzes the hydrolysis of the adenine ring of phosphoribosyl-AMP. The protein is Phosphoribosyl-AMP cyclohydrolase of Neisseria meningitidis serogroup A / serotype 4A (strain DSM 15465 / Z2491).